Consider the following 594-residue polypeptide: Elongation factor 4 (594 aa).

One can recognise a tr-type G domain in the interval K2–E184. Residues D14–T19 and N131–D134 contribute to the GTP site.

Belongs to the TRAFAC class translation factor GTPase superfamily. Classic translation factor GTPase family. LepA subfamily.

It localises to the cell inner membrane. It carries out the reaction GTP + H2O = GDP + phosphate + H(+). Functionally, required for accurate and efficient protein synthesis under certain stress conditions. May act as a fidelity factor of the translation reaction, by catalyzing a one-codon backward translocation of tRNAs on improperly translocated ribosomes. Back-translocation proceeds from a post-translocation (POST) complex to a pre-translocation (PRE) complex, thus giving elongation factor G a second chance to translocate the tRNAs correctly. Binds to ribosomes in a GTP-dependent manner. The polypeptide is Elongation factor 4 (Francisella tularensis subsp. holarctica (strain FTNF002-00 / FTA)).